The sequence spans 971 residues: Endoplasmic reticulum calcium ATPase srcA (971 aa).

Topologically, residues 1–25 are cytoplasmic; that stretch reads MNNEALAEDPPTPLWELVLEQFKDQ. Residues 26 to 46 traverse the membrane as a helical segment; the sequence is LVLILLGSAAVSFVLALFEEG. The Lumenal portion of the chain corresponds to 47–49; it reads DDW. Residues 50 to 70 form a helical membrane-spanning segment; the sequence is TAFVDPVVILTILILNAVVGV. The Cytoplasmic segment spans residues 71-217; sequence TQESSAEKAI…PTPLKQKLND (147 aa). Residues 218 to 238 form a helical membrane-spanning segment; it reads FGDMLAKVITVICVLVWLINV. Topologically, residues 239 to 262 are lumenal; it reads EHFNDPAHGGWAKGAIYYLKIAVS. A helical transmembrane segment spans residues 263–283; it reads LGVAAIPEGLAVVITTCLALG. V265, A266, I268, and E270 together coordinate Ca(2+). Over 284-718 the chain is Cytoplasmic; it reads TRKMAAKNAV…GRSIYSNTQQ (435 aa). The active-site 4-aspartylphosphate intermediate is D312. Mg(2+) contacts are provided by D312 and T314. ATP is bound by residues T314, E402, R453, K473, R518, R637, and K643. Mg(2+) is bound at residue D662. ATP is bound at residue N665. A helical transmembrane segment spans residues 719-741; sequence FIRYLISSNIGEVVSIFLTAALG. Residues N727 and E730 each contribute to the Ca(2+) site. The Lumenal portion of the chain corresponds to 742–750; sequence MPEALIPVQ. A helical transmembrane segment spans residues 751–770; the sequence is LLWVNLVTDGLPATALSFNP. Ca(2+) is bound by residues N755, T758, and D759. The Cytoplasmic portion of the chain corresponds to 771 to 795; the sequence is PDHDVMRRAPRKRDEPLVGGWLLFR. The chain crosses the membrane as a helical span at residues 796-816; the sequence is YLAIGTYVGAATVFGYIWWFV. The Lumenal segment spans residues 817-854; the sequence is YNPEGPQISFWQLSHFHKCSAQFPEIGCEMFSNEMSRS. Residues 855 to 875 traverse the membrane as a helical segment; the sequence is ASTVSLSILVVIEMLNAMNAL. A Ca(2+)-binding site is contributed by E867. Residues 876-891 are Cytoplasmic-facing; that stretch reads SSSESLLAFPLWNNMM. The helical transmembrane segment at 892–912 threads the bilayer; the sequence is LVYAIILSMTLHFAILYIPFL. Residues 913–917 are Lumenal-facing; the sequence is QTLFS. Residues 918 to 938 traverse the membrane as a helical segment; sequence ILPLNWTEWKAVLAISAPVVA. Residues 939–971 lie on the Cytoplasmic side of the membrane; the sequence is IDELLKYAERRLYTLPAIAGEQQNGVAFKPKKA.

It belongs to the cation transport ATPase (P-type) (TC 3.A.3) family. Requires Mg(2+) as cofactor.

It is found in the endoplasmic reticulum membrane. The catalysed reaction is Ca(2+)(in) + ATP + H2O = Ca(2+)(out) + ADP + phosphate + H(+). Its function is as follows. Magnesium-dependent enzyme catalyzes the hydrolysis of ATP coupled with the translocation of calcium from the cytosol to the endoplasmic reticulum lumen. Its activity is coupled to the unfolded protein response (UPR) and Ca(2+) import into the endoplasmioc reticulum is important for redox homeostasis, virulence, cell wall biosynthesis, and resistance to antifungal compounds that inhibit Ca2+ signaling. With pmrA, promotes radial growth and conidiation. In Aspergillus fumigatus (strain ATCC MYA-4609 / CBS 101355 / FGSC A1100 / Af293) (Neosartorya fumigata), this protein is Endoplasmic reticulum calcium ATPase srcA (srcA).